Here is a 775-residue protein sequence, read N- to C-terminus: MKKKQEESSLEKLSTWYQDGEQDGGDRSEKRRMSLKASDFESSSRSGGSKSKEDNKSVVDVEHQDRDSKRERDGRERTHGSSSDSSKRKRWDEAGGLVNDGDHKSSKLSDSRHDSGGERVSVSNEHGESRRDLKSDRSLKTSSRDEKSKSRGVKDDDRGSPLKKTSGKDGSEVVREVGRSNRSKTPDADYEKEKYSRKDERSRGRDDGWSDRDRDQEGLKDNWKRRHSSSGDKDQKDGDLLYDRGREREFPRQGRERSEGERSHGRLGGRKDGNRGEAVKALSSGGVSNENYDVIEIQTKPHDYVRGESGPNFARMTESGQQPPKKPSNNEEEWAHNQEGRQRSETFGFGSYGEDSRDEAGEASSDYSGAKARNQRGSTPGRTNFVQTPNRGYQTPQGTRGNRPLRGGKGRPAGGRENQQGAIPMPIMGSPFANLGMPPPSPIHSLTPGMSPIPGTSVTPVFMPPFAPTLIWPGARGVDGNMLPVPPVLSPLPPGPSGPRFPSIGTPPNPNMFFTPPGSDRGGPPNFPGSNISGQMGRGMPSDKTSGGWVPPRGGGPPGKAPSRGEQNDYSQNFVDTGMRPQNFIRELELTNVEDYPKLRELIQKKDEIVSNSASAPMYLKGDLHEVELSPELFGTKFDVILVDPPWEEYVHRAPGVSDSMEYWTFEDIINLKIEAIADTPSFLFLWVGDGVGLEQGRQCLKKWGFRRCEDICWVKTNKSNAAPTLRHDSRTVFQRSKEHCLMGIKGTVRRSTDGHIIHANIDTDVIIAEEPPYG.

Residues Met-1–Leu-10 are compositionally biased toward basic and acidic residues. Disordered regions lie at residues Met-1 to Pro-424 and Asp-520 to Asp-569. Residues Phe-40 to Ser-49 show a composition bias toward low complexity. Composition is skewed to basic and acidic residues over residues Lys-50–His-79, Asp-100–Gly-117, Glu-125–Asn-222, Ser-229–Ala-278, and Glu-333–Ser-344. Residues Gln-375–Arg-400 show a composition bias toward polar residues.

The protein belongs to the MT-A70-like family. As to quaternary structure, forms homodimers. Interacts with HAKAI, MTA and VIR. Associates with MTA, FIP37, VIR and HAKAI to form the m6A writer complex which is essential for adenosine methylation at specific mRNA sequences.

It localises to the nucleus speckle. Its subcellular location is the nucleus. The protein localises to the nucleoplasm. In terms of biological role, probable non-catalytic subunit of the N6-methyltransferase complex, a multiprotein complex that mediates N6-methyladenosine (m6A) methylation at the 5'-[AG]GAC-3' consensus sites of some mRNAs. Associates with MTA, FIP37, VIR and HAKAI to form the m6A writer complex which is essential for adenosine methylation at specific mRNA sequences. N6-methyladenosine (m6A) plays a role in mRNA stability, processing, translation efficiency and editing. The chain is N6-adenosine-methyltransferase non-catalytic subunit MTB from Arabidopsis thaliana (Mouse-ear cress).